A 149-amino-acid polypeptide reads, in one-letter code: Myoglobin (149 aa).

Ala-2 is subject to N-acetylalanine. The region spanning Ala-2–Lys-143 is the Globin domain. His-89 provides a ligand contact to heme b.

The protein belongs to the globin family. In terms of assembly, monomeric.

Its subcellular location is the cytoplasm. It is found in the sarcoplasm. It catalyses the reaction Fe(III)-heme b-[protein] + nitric oxide + H2O = Fe(II)-heme b-[protein] + nitrite + 2 H(+). The catalysed reaction is H2O2 + AH2 = A + 2 H2O. Monomeric heme protein which primary function is to store oxygen and facilitate its diffusion within muscle tissues. Reversibly binds oxygen through a pentacoordinated heme iron and enables its timely and efficient release as needed during periods of heightened demand. Depending on the oxidative conditions of tissues and cells, and in addition to its ability to bind oxygen, it also has a nitrite reductase activity whereby it regulates the production of bioactive nitric oxide. Under stress conditions, like hypoxia and anoxia, it also protects cells against reactive oxygen species thanks to its pseudoperoxidase activity. In Galeorhinus galeus (Tope shark), this protein is Myoglobin (mb).